The following is an 876-amino-acid chain: Leucine--tRNA ligase (876 aa).

Residues 43-53 (PYPSGRIHMGH) carry the 'HIGH' region motif. Residues 632–636 (KMSKS) carry the 'KMSKS' region motif. Lys-635 provides a ligand contact to ATP.

This sequence belongs to the class-I aminoacyl-tRNA synthetase family.

It localises to the cytoplasm. The catalysed reaction is tRNA(Leu) + L-leucine + ATP = L-leucyl-tRNA(Leu) + AMP + diphosphate. The protein is Leucine--tRNA ligase of Agrobacterium fabrum (strain C58 / ATCC 33970) (Agrobacterium tumefaciens (strain C58)).